A 373-amino-acid chain; its full sequence is GTPase-activating protein gyp10 (373 aa).

A Rab-GAP TBC domain is found at 35 to 220 (FLMKSLRKSV…RLFDFFISSH (186 aa)). Residues 343–363 (IFNGCNMLAAITVIGIGIVAS) form a helical membrane-spanning segment.

The protein localises to the endoplasmic reticulum membrane. Has a role in vesicular trafficking and septation during cytokinesis. The protein is GTPase-activating protein gyp10 (gyp10) of Schizosaccharomyces pombe (strain 972 / ATCC 24843) (Fission yeast).